A 75-amino-acid chain; its full sequence is MKQLLETIAKSLVDCPDEVQVSEVTGEQSIILELKVAPEDMGKVIGKQGRIAKAIRTVIKAAAVKENKRVVVEII.

The KH domain occupies 29 to 75 (SIILELKVAPEDMGKVIGKQGRIAKAIRTVIKAAAVKENKRVVVEII).

Belongs to the KhpA RNA-binding protein family. Forms a complex with KhpB.

It localises to the cytoplasm. Its function is as follows. A probable RNA chaperone. Forms a complex with KhpB which binds to cellular RNA and controls its expression. Plays a role in peptidoglycan (PG) homeostasis and cell length regulation. The sequence is that of RNA-binding protein KhpA from Clostridium acetobutylicum (strain ATCC 824 / DSM 792 / JCM 1419 / IAM 19013 / LMG 5710 / NBRC 13948 / NRRL B-527 / VKM B-1787 / 2291 / W).